The following is a 196-amino-acid chain: Large ribosomal subunit protein bL25 (196 aa).

Belongs to the bacterial ribosomal protein bL25 family. CTC subfamily. Part of the 50S ribosomal subunit; part of the 5S rRNA/L5/L18/L25 subcomplex. Contacts the 5S rRNA. Binds to the 5S rRNA independently of L5 and L18.

Functionally, this is one of the proteins that binds to the 5S RNA in the ribosome where it forms part of the central protuberance. This chain is Large ribosomal subunit protein bL25, found in Geotalea daltonii (strain DSM 22248 / JCM 15807 / FRC-32) (Geobacter daltonii).